A 330-amino-acid polypeptide reads, in one-letter code: Cathepsin S (330 aa).

The first 17 residues, 1–17 (MAVLGAPGVLCDNGATA), serve as a signal peptide directing secretion. Positions 18 to 112 (ERPTLDHHWD…GTLKSSSNQT (95 aa)) are cleaved as a propeptide — activation peptide. N-linked (GlcNAc...) asparagine glycans are attached at residues N100 and N110. Intrachain disulfides connect C124-C222, C134-C179, C168-C211, and C271-C319. C137 is a catalytic residue. Catalysis depends on residues H277 and N297.

The protein belongs to the peptidase C1 family. As to quaternary structure, monomer. In terms of tissue distribution, highest levels occur in the ileum followed by spleen, brain, thyroid, ovary and uterus. Low levels are found in the liver, kidney, jejunum and lung with lowest levels in the heart.

It localises to the lysosome. Its subcellular location is the secreted. The protein localises to the cytoplasmic vesicle. It is found in the phagosome. The catalysed reaction is Similar to cathepsin L, but with much less activity on Z-Phe-Arg-|-NHMec, and more activity on the Z-Val-Val-Arg-|-Xaa compound.. Functionally, thiol protease. Key protease responsible for the removal of the invariant chain from MHC class II molecules and MHC class II antigen presentation. The bond-specificity of this proteinase is in part similar to the specificities of cathepsin L. In Rattus norvegicus (Rat), this protein is Cathepsin S (Ctss).